The primary structure comprises 169 residues: Ribosome maturation factor RimM (169 aa).

The PRC barrel domain maps to 96–166 (EDEFYFADLI…AVVVRPVEVE (71 aa)).

The protein belongs to the RimM family. As to quaternary structure, binds ribosomal protein uS19.

Its subcellular location is the cytoplasm. In terms of biological role, an accessory protein needed during the final step in the assembly of 30S ribosomal subunit, possibly for assembly of the head region. Essential for efficient processing of 16S rRNA. May be needed both before and after RbfA during the maturation of 16S rRNA. It has affinity for free ribosomal 30S subunits but not for 70S ribosomes. This is Ribosome maturation factor RimM from Acidiphilium cryptum (strain JF-5).